Reading from the N-terminus, the 384-residue chain is 8-amino-7-oxononanoate synthase (384 aa).

Arginine 21 is a substrate binding site. Residue 108–109 (GF) coordinates pyridoxal 5'-phosphate. Histidine 133 contacts substrate. Pyridoxal 5'-phosphate contacts are provided by serine 179, histidine 207, and threonine 233. Position 236 is an N6-(pyridoxal phosphate)lysine (lysine 236). Residue threonine 352 participates in substrate binding.

Belongs to the class-II pyridoxal-phosphate-dependent aminotransferase family. BioF subfamily. In terms of assembly, homodimer. Pyridoxal 5'-phosphate is required as a cofactor.

It carries out the reaction 6-carboxyhexanoyl-[ACP] + L-alanine + H(+) = (8S)-8-amino-7-oxononanoate + holo-[ACP] + CO2. Its pathway is cofactor biosynthesis; biotin biosynthesis. Functionally, catalyzes the decarboxylative condensation of pimeloyl-[acyl-carrier protein] and L-alanine to produce 8-amino-7-oxononanoate (AON), [acyl-carrier protein], and carbon dioxide. This is 8-amino-7-oxononanoate synthase from Escherichia coli (strain K12 / DH10B).